A 128-amino-acid chain; its full sequence is Sulfurtransferase TusD (128 aa).

C78 acts as the Cysteine persulfide intermediate in catalysis.

The protein belongs to the DsrE/TusD family. As to quaternary structure, heterohexamer, formed by a dimer of trimers. The hexameric TusBCD complex contains 2 copies each of TusB, TusC and TusD. The TusBCD complex interacts with TusE.

The protein resides in the cytoplasm. Part of a sulfur-relay system required for 2-thiolation of 5-methylaminomethyl-2-thiouridine (mnm(5)s(2)U) at tRNA wobble positions. Accepts sulfur from TusA and transfers it in turn to TusE. This chain is Sulfurtransferase TusD, found in Enterobacter sp. (strain 638).